The chain runs to 432 residues: Thiol-specific monooxygenase (432 aa).

Residues 13-17 and 46-47 contribute to the FAD site; these read GGGPG and VW. Residue 65–66 participates in NADP(+) binding; that stretch reads TN. FAD is bound at residue 117-118; the sequence is EV. 199 to 202 provides a ligand contact to NADP(+); it reads SGQD.

This sequence belongs to the FMO family. As to quaternary structure, monomer. The cofactor is FAD.

In terms of biological role, flavin-dependent oxidation of thiol-containing compounds. Probably required for the correct folding of disulfide-bonded proteins. This is Thiol-specific monooxygenase (FMO1) from Saccharomyces cerevisiae (strain ATCC 204508 / S288c) (Baker's yeast).